A 356-amino-acid polypeptide reads, in one-letter code: Probable arabinogalactan endo-beta-1,4-galactanase A (356 aa).

A signal peptide spans 1–21 (MLGKMILLPLFVLLCHSLASA). The N-linked (GlcNAc...) asparagine glycan is linked to Asn133. Glu157 acts as the Proton donor in catalysis. The active-site Nucleophile is Glu268.

The protein belongs to the glycosyl hydrolase 53 family.

It localises to the secreted. The catalysed reaction is The enzyme specifically hydrolyzes (1-&gt;4)-beta-D-galactosidic linkages in type I arabinogalactans.. Endogalactanase involved in the degradation of plant cell wall polysaccharides, and more particularly of hairy regions of pectin. The polypeptide is Probable arabinogalactan endo-beta-1,4-galactanase A (galA) (Neosartorya fischeri (strain ATCC 1020 / DSM 3700 / CBS 544.65 / FGSC A1164 / JCM 1740 / NRRL 181 / WB 181) (Aspergillus fischerianus)).